A 314-amino-acid chain; its full sequence is MERQNQSCVVEFILLGFSNYPELQGQLFVAFLVIYLVTLIGNAIIIVIVSLDQSLHVPMYLFLLNLSVVDLSFSAVIMPEMLVVLSTEKTTISFGGCFAQMYFILLFGGAECFLLGAMAYDRFAAICHPLNYQMIMNKGVFMKLIIFSWALGFMLGTVQTSWVSSFPFCGLNEINHISCETPAVLELACADTFLFEIYAFTGTFLIILVPFLLILLSYIRVLFAILKMPSTTGRQKAFSTCAAHLTSVTLFYGTASMTYLQPKSGYSPETKKVMSLSYSLLTPLLNLLIYSLRNSEMKRALMKLWRRRVVLHTI.

Residues 1–25 (MERQNQSCVVEFILLGFSNYPELQG) are Extracellular-facing. Asn-5 carries an N-linked (GlcNAc...) asparagine glycan. The helical transmembrane segment at 26–46 (QLFVAFLVIYLVTLIGNAIII) threads the bilayer. The Cytoplasmic segment spans residues 47-54 (VIVSLDQS). The chain crosses the membrane as a helical span at residues 55–75 (LHVPMYLFLLNLSVVDLSFSA). At 76–99 (VIMPEMLVVLSTEKTTISFGGCFA) the chain is on the extracellular side. Residues Cys-97 and Cys-189 are joined by a disulfide bond. A helical transmembrane segment spans residues 100-120 (QMYFILLFGGAECFLLGAMAY). Residues 121–139 (DRFAAICHPLNYQMIMNKG) are Cytoplasmic-facing. The chain crosses the membrane as a helical span at residues 140–160 (VFMKLIIFSWALGFMLGTVQT). Topologically, residues 161-197 (SWVSSFPFCGLNEINHISCETPAVLELACADTFLFEI) are extracellular. Residues 198-217 (YAFTGTFLIILVPFLLILLS) traverse the membrane as a helical segment. At 218–237 (YIRVLFAILKMPSTTGRQKA) the chain is on the cytoplasmic side. The helical transmembrane segment at 238–258 (FSTCAAHLTSVTLFYGTASMT) threads the bilayer. Residues 259 to 271 (YLQPKSGYSPETK) lie on the Extracellular side of the membrane. A helical transmembrane segment spans residues 272-292 (KVMSLSYSLLTPLLNLLIYSL). At 293 to 314 (RNSEMKRALMKLWRRRVVLHTI) the chain is on the cytoplasmic side.

The protein belongs to the G-protein coupled receptor 1 family.

It localises to the cell membrane. Odorant receptor. The protein is Olfactory receptor 10A6 (OR10A6) of Homo sapiens (Human).